A 229-amino-acid polypeptide reads, in one-letter code: Thiamine-phosphate synthase (229 aa).

4-amino-2-methyl-5-(diphosphooxymethyl)pyrimidine-binding positions include 38–42 (QFREK) and Asn-73. Asp-74 and Asp-93 together coordinate Mg(2+). Ser-111 provides a ligand contact to 4-amino-2-methyl-5-(diphosphooxymethyl)pyrimidine. 137–139 (TLS) lines the 2-[(2R,5Z)-2-carboxy-4-methylthiazol-5(2H)-ylidene]ethyl phosphate pocket. Position 140 (Lys-140) interacts with 4-amino-2-methyl-5-(diphosphooxymethyl)pyrimidine. 2-[(2R,5Z)-2-carboxy-4-methylthiazol-5(2H)-ylidene]ethyl phosphate is bound by residues Gly-169 and 189-190 (IS).

This sequence belongs to the thiamine-phosphate synthase family. It depends on Mg(2+) as a cofactor.

It catalyses the reaction 2-[(2R,5Z)-2-carboxy-4-methylthiazol-5(2H)-ylidene]ethyl phosphate + 4-amino-2-methyl-5-(diphosphooxymethyl)pyrimidine + 2 H(+) = thiamine phosphate + CO2 + diphosphate. It carries out the reaction 2-(2-carboxy-4-methylthiazol-5-yl)ethyl phosphate + 4-amino-2-methyl-5-(diphosphooxymethyl)pyrimidine + 2 H(+) = thiamine phosphate + CO2 + diphosphate. The catalysed reaction is 4-methyl-5-(2-phosphooxyethyl)-thiazole + 4-amino-2-methyl-5-(diphosphooxymethyl)pyrimidine + H(+) = thiamine phosphate + diphosphate. It functions in the pathway cofactor biosynthesis; thiamine diphosphate biosynthesis; thiamine phosphate from 4-amino-2-methyl-5-diphosphomethylpyrimidine and 4-methyl-5-(2-phosphoethyl)-thiazole: step 1/1. Condenses 4-methyl-5-(beta-hydroxyethyl)thiazole monophosphate (THZ-P) and 2-methyl-4-amino-5-hydroxymethyl pyrimidine pyrophosphate (HMP-PP) to form thiamine monophosphate (TMP). This is Thiamine-phosphate synthase from Streptococcus suis (strain 98HAH33).